The primary structure comprises 196 residues: Nucleoid occlusion factor SlmA (196 aa).

The region spanning 7–68 is the HTH tetR-type domain; the sequence is TNRREEILQA…GLIEFIEDSI (62 aa). A DNA-binding region (H-T-H motif) is located at residues 31 to 50; it reads TTAKLAAQVGVSEAALYRHF. Positions 115–142 form a coiled coil; that stretch reads EQDRLQSRINQLFERIETQLRQVLRERK.

It belongs to the nucleoid occlusion factor SlmA family. Homodimer. Interacts with FtsZ.

Its subcellular location is the cytoplasm. It is found in the nucleoid. In terms of biological role, required for nucleoid occlusion (NO) phenomenon, which prevents Z-ring formation and cell division over the nucleoid. Acts as a DNA-associated cell division inhibitor that binds simultaneously chromosomal DNA and FtsZ, and disrupts the assembly of FtsZ polymers. SlmA-DNA-binding sequences (SBS) are dispersed on non-Ter regions of the chromosome, preventing FtsZ polymerization at these regions. This is Nucleoid occlusion factor SlmA from Photobacterium profundum (strain SS9).